The chain runs to 273 residues: Zinc finger protein 80 (273 aa).

2 C2H2-type zinc fingers span residues 49-71 (YKCK…HQIH) and 77-99 (YECQ…MRIH). The C2H2-type 3; atypical zinc-finger motif lies at 105–127 (CKCVECGKVFNRRSHLLCYRQIH). 4 C2H2-type zinc fingers span residues 133-155 (YECS…RMTH), 161-183 (FGCK…MKIH), 189-211 (YKCG…SMTH), and 217-239 (YECK…TRSH).

Belongs to the krueppel C2H2-type zinc-finger protein family.

The protein resides in the nucleus. Its function is as follows. May be involved in transcriptional regulation. In Gorilla gorilla gorilla (Western lowland gorilla), this protein is Zinc finger protein 80 (ZNF80).